Here is a 325-residue protein sequence, read N- to C-terminus: E3 ubiquitin-protein ligase SIAH2 (325 aa).

Residues 1–15 are compositionally biased toward polar residues; the sequence is MSRPSSTGPSANKPC. The disordered stretch occupies residues 1–43; it reads MSRPSSTGPSANKPCSKQPPPPQTPHAPSPAAPPAAATISAAG. Position 6 is a phosphoserine (Ser-6). Phosphoserine; by DYRK2 is present on Ser-16. Over residues 17–33 the composition is skewed to pro residues; the sequence is KQPPPPQTPHAPSPAAP. Thr-24 bears the Phosphothreonine; by MAPK14 mark. At Ser-29 the chain carries Phosphoserine; by DYRK2 and MAPK14. Low complexity predominate over residues 34-43; that stretch reads PAAATISAAG. Residue Ser-69 is modified to Phosphoserine; by DYRK2. Residues 81–116 form an RING-type zinc finger; it reads CPVCFDYVLPPILQCQAGHLVCNQCRQKLSCCPTCR. At Thr-120 the chain carries Phosphothreonine; by DYRK2. The interval 131–323 is SBD; it reads VASAVLFPCK…LGINVTISTC (193 aa). The SIAH-type zinc-finger motif lies at 134–194; it reads AVLFPCKYAT…VMSHLMHAHK (61 aa). Cys-139, Cys-146, His-158, Cys-162, Cys-169, Cys-176, His-188, and His-193 together coordinate Zn(2+).

The protein belongs to the SINA (Seven in absentia) family. As to quaternary structure, homodimer. Interacts with UBE2E2. Interacts with VAV1, without mediating its ubiquitin-mediated degradation. Interacts with CACYBP/SIP. Probable component of some large E3 complex possibly composed of UBE2D1, SIAH2, CACYBP/SIP, SKP1, APC and TBL1X. Interacts with UBE2I. Interacts with PEG10, which may inhibit its activity. Interacts with EGLN2 and SNCAIP. Interacts with DYRK2. Interacts with PEG3. Interacts with NR1D1 and NR1D2. Interacts with DCC. Interacts with AXIN1. In terms of processing, phosphorylated at Ser-29 by DYRK2; this increases the ubiquitin ligase activity and promotes degradation of EGLN3. Phosphorylated at Thr-24 and Ser-29 by MAPK14, which mediates the degradation by the proteasome of EGLN3. As to expression, widely expressed at low level in embryos and adults. Expressed in a specific population of germ cells within both the mouse ovary and testis. Absent in primordial oocytes but expressed in all growing oocytes, coincident with their recruitment from the pool of quiescent cells. Its level of expression increases as the oocytes mature. Expressed in Graafian follicles and in fertilized zygotes up until the two cell stage, a time of extensive maternal transcript degradation and zygotic gene activation. Expressed in the testis from postmeiotic spermatids.

Its subcellular location is the cytoplasm. The protein resides in the nucleus. The enzyme catalyses S-ubiquitinyl-[E2 ubiquitin-conjugating enzyme]-L-cysteine + [acceptor protein]-L-lysine = [E2 ubiquitin-conjugating enzyme]-L-cysteine + N(6)-ubiquitinyl-[acceptor protein]-L-lysine.. It participates in protein modification; protein ubiquitination. E3 ubiquitin-protein ligase that mediates ubiquitination and subsequent proteasomal degradation of target proteins. E3 ubiquitin ligases accept ubiquitin from an E2 ubiquitin-conjugating enzyme in the form of a thioester and then directly transfers the ubiquitin to targeted substrates. Mediates E3 ubiquitin ligase activity either through direct binding to substrates or by functioning as the essential RING domain subunit of larger E3 complexes. Mediates ubiquitination and proteasomal degradation of DYRK2 in response to hypoxia. Promotes monoubiquitination of SNCA. Triggers the ubiquitin-mediated degradation of many substrates, including proteins involved in transcription regulation (GPS2, POU2AF1, PML, NCOR1), a cell surface receptor (DCC), an antiapoptotic protein (BAG1), and a protein involved in synaptic vesicle function in neurons (SYP). It is thereby involved in apoptosis, tumor suppression, cell cycle, transcription and signaling processes. Has some overlapping function with SIAH1. Triggers the ubiquitin-mediated degradation of TRAF2, whereas SIAH1 does not. Regulates cellular clock function via ubiquitination of the circadian transcriptional repressors NR1D1 and NR1D2 leading to their proteasomal degradation. Plays an important role in mediating the rhythmic degradation/clearance of NR1D1 and NR1D2 contributing to their circadian profile of protein abundance. Mediates ubiquitination and degradation of EGLN2 and EGLN3 in response to the unfolded protein response (UPR), leading to their degradation and subsequent stabilization of ATF4. Also part of the Wnt signaling pathway in which it mediates the Wnt-induced ubiquitin-mediated proteasomal degradation of AXIN1. In Mus musculus (Mouse), this protein is E3 ubiquitin-protein ligase SIAH2 (Siah2).